The chain runs to 443 residues: Trigger factor (443 aa).

Positions 161–246 constitute a PPIase FKBP-type domain; sequence GDKVVIDFQG…IKKIMEGKLP (86 aa).

It belongs to the FKBP-type PPIase family. Tig subfamily.

It localises to the cytoplasm. It catalyses the reaction [protein]-peptidylproline (omega=180) = [protein]-peptidylproline (omega=0). In terms of biological role, involved in protein export. Acts as a chaperone by maintaining the newly synthesized protein in an open conformation. Functions as a peptidyl-prolyl cis-trans isomerase. In Legionella pneumophila subsp. pneumophila (strain Philadelphia 1 / ATCC 33152 / DSM 7513), this protein is Trigger factor.